The following is a 199-amino-acid chain: Recombination protein RecR (199 aa).

The C4-type zinc-finger motif lies at 58–73; that stretch reads CKVCTNLTDQEVCNIC. The Toprim domain occupies 81-176; that stretch reads LLICVVEDPR…KVSRIAHGIP (96 aa).

It belongs to the RecR family.

In terms of biological role, may play a role in DNA repair. It seems to be involved in an RecBC-independent recombinational process of DNA repair. It may act with RecF and RecO. This chain is Recombination protein RecR, found in Alkaliphilus oremlandii (strain OhILAs) (Clostridium oremlandii (strain OhILAs)).